A 101-amino-acid chain; its full sequence is Apolipoprotein C-II (101 aa).

Residues 1–22 form the signal peptide; that stretch reads MGTRFLLALFLVLLVLGFEVQG. The tract at residues 66-74 is lipid binding; the sequence is AVDEKLRDM. A lipoprotein lipase cofactor region spans residues 78-101; that stretch reads STAAVSTYAGIFTDQVLSMLRGEE.

It belongs to the apolipoprotein C2 family. Post-translationally, proapolipoprotein C-II is synthesized as a sialic acid containing glycoprotein which is subsequently desialylated prior to its proteolytic processing. In terms of processing, proapolipoprotein C-II, the major form found in plasma undergoes proteolytic cleavage of its N-terminal hexapeptide to generate apolipoprotein C-II, which occurs as the minor form in plasma.

The protein resides in the secreted. Its function is as follows. Component of chylomicrons, very low-density lipoproteins (VLDL), low-density lipoproteins (LDL), and high-density lipoproteins (HDL) in plasma. Plays an important role in lipoprotein metabolism as an activator of lipoprotein lipase. Both proapolipoprotein C-II and apolipoprotein C-II can activate lipoprotein lipase. This Saimiri boliviensis boliviensis (Bolivian squirrel monkey) protein is Apolipoprotein C-II (APOC2).